A 621-amino-acid chain; its full sequence is Phosphomethylpyrimidine synthase (621 aa).

Low complexity predominate over residues 1 to 23; the sequence is MTAPFLSSLSPTSPLASATAPFP. The tract at residues 1–29 is disordered; the sequence is MTAPFLSSLSPTSPLASATAPFPGSRKVY. Substrate contacts are provided by residues Asn215, Met244, Tyr273, His309, 329–331, 370–373, and Glu409; these read SRG and DGLR. His413 is a binding site for Zn(2+). Position 436 (Tyr436) interacts with substrate. Residue His477 coordinates Zn(2+). [4Fe-4S] cluster-binding residues include Cys557, Cys560, and Cys565.

It belongs to the ThiC family. In terms of assembly, homodimer. The cofactor is [4Fe-4S] cluster.

The enzyme catalyses 5-amino-1-(5-phospho-beta-D-ribosyl)imidazole + S-adenosyl-L-methionine = 4-amino-2-methyl-5-(phosphooxymethyl)pyrimidine + CO + 5'-deoxyadenosine + formate + L-methionine + 3 H(+). It participates in cofactor biosynthesis; thiamine diphosphate biosynthesis. Its function is as follows. Catalyzes the synthesis of the hydroxymethylpyrimidine phosphate (HMP-P) moiety of thiamine from aminoimidazole ribotide (AIR) in a radical S-adenosyl-L-methionine (SAM)-dependent reaction. The chain is Phosphomethylpyrimidine synthase from Rhodospirillum rubrum (strain ATCC 11170 / ATH 1.1.1 / DSM 467 / LMG 4362 / NCIMB 8255 / S1).